Here is a 142-residue protein sequence, read N- to C-terminus: Large ribosomal subunit protein uL11 (142 aa).

The protein belongs to the universal ribosomal protein uL11 family. In terms of assembly, part of the ribosomal stalk of the 50S ribosomal subunit. Interacts with L10 and the large rRNA to form the base of the stalk. L10 forms an elongated spine to which L12 dimers bind in a sequential fashion forming a multimeric L10(L12)X complex. In terms of processing, one or more lysine residues are methylated.

Functionally, forms part of the ribosomal stalk which helps the ribosome interact with GTP-bound translation factors. The polypeptide is Large ribosomal subunit protein uL11 (Acinetobacter baumannii (strain AB307-0294)).